A 578-amino-acid polypeptide reads, in one-letter code: Solute carrier family 15 member 3 (578 aa).

Over residues 1-15 (MSAPRAEEQPSRSGE) the composition is skewed to basic and acidic residues. Positions 1–27 (MSAPRAEEQPSRSGERQPLVARGPRGP) are disordered. Transmembrane regions (helical) follow at residues 33–53 (TAAA…FGVT), 77–97 (LLFL…ADVY), 102–122 (LTIS…LTTI), 155–175 (PYCA…ASSV), and 201–221 (WFYW…AFIE). Asn223 is a glycosylation site (N-linked (GlcNAc...) asparagine). Residues 232 to 252 (IIVGLVGLAFFIFLFATPVFI) form a helical membrane-spanning segment. Residues 280-301 (SRDSESAHLLPDQRSNQPGPSP) are disordered. Residues 308–328 (FQVLVKILPVMVTLVPYWMVY) form a helical membrane-spanning segment. N-linked (GlcNAc...) asparagine glycosylation is present at Asn353. 2 consecutive transmembrane segments (helical) span residues 367 to 387 (IPEA…IPVK) and 405 to 425 (LQKM…AGVL). A glycan (N-linked (GlcNAc...) asparagine) is linked at Asn436. Helical transmembrane passes span 462–481 (YLLI…EFAY), 494–514 (GIFF…VALL), and 538–558 (YFFL…WIAG).

Belongs to the major facilitator superfamily. Proton-dependent oligopeptide transporter (POT/PTR) (TC 2.A.17) family. Expressed highly in bone marrow derived macrophages, and weakly in spleen and lung. Expressed in plasmacytoid dendritic cells (pDCs) in response to toll-like receptors (TLR) stimulation.

Its subcellular location is the lysosome membrane. It localises to the endosome membrane. The catalysed reaction is N-acetyl-D-muramoyl-L-alanyl-D-isoglutamine(out) + n H(+)(out) = N-acetyl-D-muramoyl-L-alanyl-D-isoglutamine(in) + n H(+)(in). It catalyses the reaction glycylglycylglycine(out) + n H(+)(out) = glycylglycylglycine(in) + n H(+)(in). It carries out the reaction carnosine(out) + n H(+)(out) = carnosine(in) + n H(+)(in). The enzyme catalyses L-histidine(out) + n H(+)(out) = L-histidine(in) + n H(+)(in). Proton-coupled amino-acid transporter that transports free histidine and certain di- and tripeptides, and is involved in innate immune response. Also able to transport carnosine. Involved in the detection of microbial pathogens by toll-like receptors (TLRs) and NOD-like receptors (NLRs), probably by mediating transport of bacterial peptidoglycans across the endolysosomal membrane: catalyzes the transport of certain bacterial peptidoglycans, such as muramyl dipeptide (MDP), the NOD2 ligand. The polypeptide is Solute carrier family 15 member 3 (Mus musculus (Mouse)).